The chain runs to 79 residues: Putative antitoxin VapB12 (79 aa).

Belongs to the UPF0330 family.

Its function is as follows. Possibly the antitoxin component of a type II toxin-antitoxin (TA) system. Its cognate toxin is VapC12 (Potential). The sequence is that of Putative antitoxin VapB12 (vapB12) from Sulfurisphaera tokodaii (strain DSM 16993 / JCM 10545 / NBRC 100140 / 7) (Sulfolobus tokodaii).